The sequence spans 424 residues: Probable ribonuclease FAU-1 (424 aa).

The protein belongs to the FAU-1 family.

Its function is as follows. Probable RNase involved in rRNA stability through maturation and/or degradation of precursor rRNAs. Binds to RNA in loop regions with AU-rich sequences. The protein is Probable ribonuclease FAU-1 of Saccharolobus islandicus (strain M.16.27) (Sulfolobus islandicus).